A 90-amino-acid chain; its full sequence is DNA-binding protein HU-alpha (90 aa).

The protein belongs to the bacterial histone-like protein family. Heterodimer of an alpha and a beta chain.

In terms of biological role, histone-like DNA-binding protein which is capable of wrapping DNA to stabilize it, and thus to prevent its denaturation under extreme environmental conditions. The polypeptide is DNA-binding protein HU-alpha (hupA) (Pseudomonas aeruginosa (strain ATCC 15692 / DSM 22644 / CIP 104116 / JCM 14847 / LMG 12228 / 1C / PRS 101 / PAO1)).